Reading from the N-terminus, the 567-residue chain is Malate synthase (567 aa).

The active-site Proton acceptor is the arginine 177. The active-site Proton donor is the aspartate 466. A Microbody targeting signal motif is present at residues 565–567 (CKL).

Belongs to the malate synthase family.

It localises to the glyoxysome. It carries out the reaction glyoxylate + acetyl-CoA + H2O = (S)-malate + CoA + H(+). Its pathway is carbohydrate metabolism; glyoxylate cycle; (S)-malate from isocitrate: step 2/2. This chain is Malate synthase, found in Oryza sativa subsp. japonica (Rice).